A 224-amino-acid polypeptide reads, in one-letter code: Small ribosomal subunit protein uS3 (224 aa).

Residues 38-106 enclose the KH type-2 domain; the sequence is LREYVKEKLG…EVYLNVVEVR (69 aa).

Belongs to the universal ribosomal protein uS3 family. Part of the 30S ribosomal subunit. Forms a tight complex with proteins S10 and S14.

Binds the lower part of the 30S subunit head. Binds mRNA in the 70S ribosome, positioning it for translation. The polypeptide is Small ribosomal subunit protein uS3 (Anaeromyxobacter sp. (strain Fw109-5)).